The following is a 193-amino-acid chain: dCTP deaminase (193 aa).

Residues 110 to 115, D128, 136 to 138, Y171, K178, and Q182 contribute to the dCTP site; these read RSSLAR and VLE. E138 (proton donor/acceptor) is an active-site residue.

This sequence belongs to the dCTP deaminase family. In terms of assembly, homotrimer.

The catalysed reaction is dCTP + H2O + H(+) = dUTP + NH4(+). It functions in the pathway pyrimidine metabolism; dUMP biosynthesis; dUMP from dCTP (dUTP route): step 1/2. In terms of biological role, catalyzes the deamination of dCTP to dUTP. The sequence is that of dCTP deaminase from Buchnera aphidicola subsp. Baizongia pistaciae (strain Bp).